Consider the following 328-residue polypeptide: Phosphate acyltransferase (328 aa).

Belongs to the PlsX family. Homodimer. Probably interacts with PlsY.

Its subcellular location is the cytoplasm. It carries out the reaction a fatty acyl-[ACP] + phosphate = an acyl phosphate + holo-[ACP]. It participates in lipid metabolism; phospholipid metabolism. Its function is as follows. Catalyzes the reversible formation of acyl-phosphate (acyl-PO(4)) from acyl-[acyl-carrier-protein] (acyl-ACP). This enzyme utilizes acyl-ACP as fatty acyl donor, but not acyl-CoA. The sequence is that of Phosphate acyltransferase from Campylobacter jejuni subsp. jejuni serotype O:23/36 (strain 81-176).